A 72-amino-acid polypeptide reads, in one-letter code: Putative transmembrane protein DDB_G0272126 (72 aa).

The next 2 membrane-spanning stretches (helical) occupy residues 6-26 (KIIK…NTII) and 38-58 (IILV…IFYG).

The protein resides in the membrane. This is Putative transmembrane protein DDB_G0272126 from Dictyostelium discoideum (Social amoeba).